The chain runs to 923 residues: Hexokinase-3 (923 aa).

A compositionally biased stretch (polar residues) spans 1 to 18 (MDSIGSSGLRQGEETLSC). A disordered region spans residues 1-30 (MDSIGSSGLRQGEETLSCSEEGLPGPSDSS). 2 consecutive Hexokinase domains span residues 27–471 (SDSS…MVTA) and 477–912 (AAHR…LVTA). The segment at 84–220 (HGTEQGDFVV…AYNIDVVAVV (137 aa)) is hexokinase small subdomain 1. Residue 95–102 (ELGATGAS) coordinates ATP. D-glucose 6-phosphate is bound at residue 95-104 (ELGATGASLR). Residues serine 168, 185–186 (TK), and 221–222 (ND) each bind D-glucose. The interval 221 to 460 (NDTVGTMMGC…CDVSLIPSVD (240 aa)) is hexokinase large subdomain 1. Residues aspartate 222 and threonine 245 each coordinate D-glucose 6-phosphate. D-glucose-binding positions include asparagine 248, glutamate 273, and 304–307 (QRFE). 426-428 (GGR) serves as a coordination point for D-glucose 6-phosphate. ATP-binding positions include 438–439 (SV) and 542–547 (DLGGTN). Residues 531 to 661 (DGSERGDFLA…AVELNVVAIV (131 aa)) are hexokinase small subdomain 2. 542–546 (DLGGT) is a D-glucose 6-phosphate binding site. D-glucose contacts are provided by residues 609–610 (SF), 626–627 (TK), and 662–663 (ND). The tract at residues 662–901 (NDTVGTMMSC…CVVTFLQSED (240 aa)) is hexokinase large subdomain 2. D-glucose 6-phosphate is bound by residues aspartate 663 and threonine 686. An ATP-binding site is contributed by threonine 686. Residues 688 to 689 (TN), glutamate 714, and glutamate 748 contribute to the D-glucose site. Residues 753–754 (GM), 790–794 (TKFLS), and 869–873 (TLYKL) each bind ATP. Residues 867–869 (DGT) and serine 903 each bind D-glucose 6-phosphate.

Belongs to the hexokinase family.

The catalysed reaction is a D-hexose + ATP = a D-hexose 6-phosphate + ADP + H(+). The enzyme catalyses D-fructose + ATP = D-fructose 6-phosphate + ADP + H(+). It carries out the reaction D-glucose + ATP = D-glucose 6-phosphate + ADP + H(+). The protein operates within carbohydrate metabolism; hexose metabolism. It participates in carbohydrate degradation; glycolysis; D-glyceraldehyde 3-phosphate and glycerone phosphate from D-glucose: step 1/4. Hexokinase is an allosteric enzyme inhibited by its product D-glucose 6-phosphate. In terms of biological role, catalyzes the phosphorylation of hexose, such as D-glucose and D-fructose, to hexose 6-phosphate (D-glucose 6-phosphate and D-fructose 6-phosphate, respectively). Mediates the initial step of glycolysis by catalyzing phosphorylation of D-glucose to D-glucose 6-phosphate. The chain is Hexokinase-3 from Homo sapiens (Human).